A 179-amino-acid chain; its full sequence is ATP synthase subunit delta (179 aa).

The protein belongs to the ATPase delta chain family. In terms of assembly, F-type ATPases have 2 components, F(1) - the catalytic core - and F(0) - the membrane proton channel. F(1) has five subunits: alpha(3), beta(3), gamma(1), delta(1), epsilon(1). F(0) has three main subunits: a(1), b(2) and c(10-14). The alpha and beta chains form an alternating ring which encloses part of the gamma chain. F(1) is attached to F(0) by a central stalk formed by the gamma and epsilon chains, while a peripheral stalk is formed by the delta and b chains.

The protein localises to the cell membrane. Functionally, f(1)F(0) ATP synthase produces ATP from ADP in the presence of a proton or sodium gradient. F-type ATPases consist of two structural domains, F(1) containing the extramembraneous catalytic core and F(0) containing the membrane proton channel, linked together by a central stalk and a peripheral stalk. During catalysis, ATP synthesis in the catalytic domain of F(1) is coupled via a rotary mechanism of the central stalk subunits to proton translocation. Its function is as follows. This protein is part of the stalk that links CF(0) to CF(1). It either transmits conformational changes from CF(0) to CF(1) or is implicated in proton conduction. This is ATP synthase subunit delta from Staphylococcus haemolyticus (strain JCSC1435).